The sequence spans 582 residues: Protein alan shepard (582 aa).

Residues 1 to 12 are compositionally biased toward pro residues; that stretch reads MHPRYSPAPPPQ. Positions 1-73 are disordered; the sequence is MHPRYSPAPP…AAPPTSRSAF (73 aa). Tyr-5 bears the Phosphotyrosine mark. Residues 13–24 are compositionally biased toward low complexity; it reads QQQQMGGPLHQQ. Over residues 25 to 36 the composition is skewed to gly residues; the sequence is QGGGGGGGGGIR. The span at 39–57 shows a compositional bias: polar residues; the sequence is SNAQQLPPQIPRSQNYSNG. A compositionally biased stretch (low complexity) spans 58–72; that stretch reads SSSSAAAAPPTSRSA. Tyr-125 and Tyr-142 each carry phosphotyrosine. Residues 164–225 are disordered; that stretch reads PATTTYGQRV…TVQNQNQQGG (62 aa). Over residues 178-225 the composition is skewed to low complexity; that stretch reads SPSNTNSSSSSNTGSQSGTLSTSLSNTTNTNTNMGPNGTVQNQNQQGG. RRM domains are found at residues 231–304 and 310–389; these read TNLY…MAKQ and TNLY…FADG. Residues 555-582 form a disordered region; it reads PMTDSEQASTAASPDEAYTQYPHQAAPK.

Its function is as follows. Has a role in the perception of gravity. The sequence is that of Protein alan shepard from Drosophila yakuba (Fruit fly).